The following is a 247-amino-acid chain: 2,3-bisphosphoglycerate-dependent phosphoglycerate mutase (247 aa).

Substrate is bound by residues 7-14, 20-21, arginine 59, 86-89, lysine 97, 113-114, and 182-183; these read RHGESEWN, TG, ERHY, RR, and GN. The Tele-phosphohistidine intermediate role is filled by histidine 8. The active-site Proton donor/acceptor is the glutamate 86.

This sequence belongs to the phosphoglycerate mutase family. BPG-dependent PGAM subfamily.

The enzyme catalyses (2R)-2-phosphoglycerate = (2R)-3-phosphoglycerate. It participates in carbohydrate degradation; glycolysis; pyruvate from D-glyceraldehyde 3-phosphate: step 3/5. Its function is as follows. Catalyzes the interconversion of 2-phosphoglycerate and 3-phosphoglycerate. This chain is 2,3-bisphosphoglycerate-dependent phosphoglycerate mutase, found in Treponema denticola (strain ATCC 35405 / DSM 14222 / CIP 103919 / JCM 8153 / KCTC 15104).